Reading from the N-terminus, the 94-residue chain is MTKSELMEKLSAKQPTLSAKEIENMVKDILEFISQSLENGDRVEVRGFGSFSLHHRQPRLGRNPKTGDSVNLSAKSVPYFKAGKELKARVDVQA.

Belongs to the bacterial histone-like protein family. Heterodimer of an alpha and a beta chain.

Its function is as follows. This protein is one of the two subunits of integration host factor, a specific DNA-binding protein that functions in genetic recombination as well as in transcriptional and translational control. The chain is Integration host factor subunit beta from Haemophilus influenzae (strain 86-028NP).